The sequence spans 446 residues: Aspartokinase (446 aa).

The 45-residue stretch at 250 to 294 folds into the RPE1 insert domain; that stretch reads IPLVKSTYMEESALNTKHSTKIDIPEDASGSTYKLPIELALQNRY.

It belongs to the aspartokinase family.

The enzyme catalyses L-aspartate + ATP = 4-phospho-L-aspartate + ADP. It functions in the pathway amino-acid biosynthesis; L-lysine biosynthesis via DAP pathway; (S)-tetrahydrodipicolinate from L-aspartate: step 1/4. The protein operates within amino-acid biosynthesis; L-methionine biosynthesis via de novo pathway; L-homoserine from L-aspartate: step 1/3. Its pathway is amino-acid biosynthesis; L-threonine biosynthesis; L-threonine from L-aspartate: step 1/5. This Rickettsia prowazekii (strain Madrid E) protein is Aspartokinase (lysC).